Here is a 365-residue protein sequence, read N- to C-terminus: Chorismate synthase (365 aa).

NADP(+) is bound at residue arginine 46. Residues 123-125 (RSS), 241-242 (NG), glycine 281, 296-300 (KPTPS), and arginine 322 contribute to the FMN site.

Belongs to the chorismate synthase family. Homotetramer. FMNH2 is required as a cofactor.

The catalysed reaction is 5-O-(1-carboxyvinyl)-3-phosphoshikimate = chorismate + phosphate. It participates in metabolic intermediate biosynthesis; chorismate biosynthesis; chorismate from D-erythrose 4-phosphate and phosphoenolpyruvate: step 7/7. Catalyzes the anti-1,4-elimination of the C-3 phosphate and the C-6 proR hydrogen from 5-enolpyruvylshikimate-3-phosphate (EPSP) to yield chorismate, which is the branch point compound that serves as the starting substrate for the three terminal pathways of aromatic amino acid biosynthesis. This reaction introduces a second double bond into the aromatic ring system. This is Chorismate synthase from Helicobacter pylori (strain J99 / ATCC 700824) (Campylobacter pylori J99).